The following is a 909-amino-acid chain: Yellow mounds protein A (909 aa).

The 277-residue stretch at 7–283 folds into the MIF4G domain; that stretch reads LNVVSRILNK…KNLFELKNNK (277 aa). Disordered stretches follow at residues 178–232, 415–439, 460–537, 627–689, and 704–774; these read SMGG…NNNI, MESS…SGIK, INLP…SSAP, VPPV…SEAR, and SLSG…AKKH. The span at 204–215 shows a compositional bias: acidic residues; that stretch reads DDDDHDEEDNEN. Composition is skewed to low complexity over residues 216 to 231 and 417 to 436; these read NYEN…NNNN and SSSN…SSSS. Over residues 473–490 the composition is skewed to polar residues; that stretch reads RSNSPSLSSVVKQPQSQQ. Residues 491-525 are compositionally biased toward low complexity; it reads NNNNNNNNNNNNTTITTTTSSNNNINNNNNNNNNN. A compositionally biased stretch (polar residues) spans 721–738; sequence STPTLKSTPAIVQNGGSI. A compositionally biased stretch (low complexity) spans 739 to 756; that stretch reads TSTSSSSSSSSSSSSSTT. Residues 845 to 877 are a coiled coil; sequence TMLFDLEEMAQEQQNLEKQNDQQQNLLTQNNQI.

In terms of biological role, plays as essential role in regulating terminal differentiation. In Dictyostelium discoideum (Social amoeba), this protein is Yellow mounds protein A (yelA).